Here is a 109-residue protein sequence, read N- to C-terminus: Large ribosomal subunit protein uL22 (109 aa).

It belongs to the universal ribosomal protein uL22 family. In terms of assembly, part of the 50S ribosomal subunit.

Functionally, this protein binds specifically to 23S rRNA; its binding is stimulated by other ribosomal proteins, e.g. L4, L17, and L20. It is important during the early stages of 50S assembly. It makes multiple contacts with different domains of the 23S rRNA in the assembled 50S subunit and ribosome. Its function is as follows. The globular domain of the protein is located near the polypeptide exit tunnel on the outside of the subunit, while an extended beta-hairpin is found that lines the wall of the exit tunnel in the center of the 70S ribosome. The chain is Large ribosomal subunit protein uL22 from Neisseria gonorrhoeae (strain ATCC 700825 / FA 1090).